A 180-amino-acid chain; its full sequence is UPF0227 protein YpsIP31758_1593 (180 aa).

This sequence belongs to the UPF0227 family.

The sequence is that of UPF0227 protein YpsIP31758_1593 from Yersinia pseudotuberculosis serotype O:1b (strain IP 31758).